Here is a 259-residue protein sequence, read N- to C-terminus: MLTIADTTFSSHLIMGTGGATSHEALERALVASGTELTTVAMRRHAGTRGGESIFDLLRRLDIAPLPNTAGCRTAREAVLTARMAREALGTTWVKVEVIADEHTLLPDVVETLDATELLAAEGFTVLAYTSDDPVAAQRLEDAGAAAVMPLGAPIGTGLGILNPHNLELICSRASVPVLVDAGIGTASDAALAMELGCSGVLLASAVNRCQNPEAMATAMRHAVEAGRLARSAGRIPEREHAQASSTFEGLASWADQVL.

Residue Lys95 is the Schiff-base intermediate with DXP of the active site. Residues Gly156, 182-183 (AG), and 204-205 (AS) contribute to the 1-deoxy-D-xylulose 5-phosphate site.

The protein belongs to the ThiG family. In terms of assembly, homotetramer. Forms heterodimers with either ThiH or ThiS.

It is found in the cytoplasm. It carries out the reaction [ThiS sulfur-carrier protein]-C-terminal-Gly-aminoethanethioate + 2-iminoacetate + 1-deoxy-D-xylulose 5-phosphate = [ThiS sulfur-carrier protein]-C-terminal Gly-Gly + 2-[(2R,5Z)-2-carboxy-4-methylthiazol-5(2H)-ylidene]ethyl phosphate + 2 H2O + H(+). It functions in the pathway cofactor biosynthesis; thiamine diphosphate biosynthesis. Catalyzes the rearrangement of 1-deoxy-D-xylulose 5-phosphate (DXP) to produce the thiazole phosphate moiety of thiamine. Sulfur is provided by the thiocarboxylate moiety of the carrier protein ThiS. In vitro, sulfur can be provided by H(2)S. The sequence is that of Thiazole synthase from Corynebacterium aurimucosum (strain ATCC 700975 / DSM 44827 / CIP 107346 / CN-1) (Corynebacterium nigricans).